The following is a 156-amino-acid chain: Small ribosomal subunit protein uS7 (156 aa).

This sequence belongs to the universal ribosomal protein uS7 family. As to quaternary structure, part of the 30S ribosomal subunit. Contacts proteins S9 and S11.

In terms of biological role, one of the primary rRNA binding proteins, it binds directly to 16S rRNA where it nucleates assembly of the head domain of the 30S subunit. Is located at the subunit interface close to the decoding center, probably blocks exit of the E-site tRNA. The chain is Small ribosomal subunit protein uS7 from Macrococcus caseolyticus (strain JCSC5402) (Macrococcoides caseolyticum).